The following is a 189-amino-acid chain: Segregation and condensation protein B (189 aa).

The protein belongs to the ScpB family. Homodimer. Homodimerization may be required to stabilize the binding of ScpA to the Smc head domains. Component of a cohesin-like complex composed of ScpA, ScpB and the Smc homodimer, in which ScpA and ScpB bind to the head domain of Smc. The presence of the three proteins is required for the association of the complex with DNA.

It localises to the cytoplasm. Participates in chromosomal partition during cell division. May act via the formation of a condensin-like complex containing Smc and ScpA that pull DNA away from mid-cell into both cell halves. This chain is Segregation and condensation protein B, found in Streptococcus sanguinis (strain SK36).